Reading from the N-terminus, the 205-residue chain is MFITFEGIDGSGKTTQSELLANYFKQIHGENNVVLTREPGGTDFAEKIRGSLLKDNIDPISELLLFTSMRYEHMKELILPALKEGKTVICDRFIDSTIAYQGYGLGVDLSLIRDLHKLVEIKYPDITFILDIDVQVGLSRAKDKNKYEEMSIDFYHKIRKGFQEIAIKESNRCNVITGIADKDNNKVYSEIIDVIRKKKKGMQPL.

Gly7–Thr14 lines the ATP pocket.

This sequence belongs to the thymidylate kinase family.

The enzyme catalyses dTMP + ATP = dTDP + ADP. Functionally, phosphorylation of dTMP to form dTDP in both de novo and salvage pathways of dTTP synthesis. The protein is Thymidylate kinase of Wolbachia pipientis subsp. Culex pipiens (strain wPip).